The chain runs to 163 residues: Gas vesicle protein H2 (163 aa).

A disordered region spans residues 57 to 92 (LGSDARSPSTPAGNADDAGDAETAHIETRASDDSDD). The segment covering 78-88 (ETAHIETRASD) has biased composition (basic and acidic residues).

The protein belongs to the gas vesicle GvpH family. As to quaternary structure, gvpF to GvpM interact with each other in vitro, and may form multi-subunit complex(es). Interacts with GvpC. Might interact with GvpA.

It localises to the gas vesicle. It is found in the cytoplasm. Its function is as follows. A minor component of the gas vesicle, also found in soluble extracts. Proteins GvpF to GvpM might be involved in nucleating gas vesicle formation. Gas vesicles are hollow, gas filled proteinaceous nanostructures found in several microbial planktonic microorganisms. They allow positioning of halobacteria at the optimal depth for growth in the poorly aerated, shallow brine pools of their habitat. Expression of 2 c-vac DNA fragments containing 2 divergently transcribed regions (gvpE-gvpF-gvpG-gvpH-gvpI-gvpJ-gvpK-gvpL-gvpM and gvpA-gvpC-gvpN-gvpO) allows H.volcanii to produce gas vesicles. The protein is Gas vesicle protein H2 of Halobacterium salinarum (strain ATCC 700922 / JCM 11081 / NRC-1) (Halobacterium halobium).